A 1024-amino-acid polypeptide reads, in one-letter code: MFYAELFCQSNFSFLTGASHPEELIVQANFLGYHSLAITDECSLAGIVRAHSAIKQHQLSVKQIVGSFFKLNTECQFVLLCPNREAYAELCRIITNARRRCEKGQYQLSQWDVMSLKHCLLIWLPTGQTSDEQWATWLSRYQQSRLWLGLQRHLRHDDEHYLHHCQTLANQFDLPITACGGVLMHRPERLPLQHTLTAIRHGCTVEQLGTQLLTNAEQSLRSEKKLRKLFKPQWLAESLYIASLCSFDLDSLRYEYPSELIPDGYTPDSYLEHLVEQGKKLRFPEGVPDAIEQTIQKELALIKEQKYPFFFLTIHDIVMFAKQQGILYQGRGSAANSVVCYCLQITSVDPRQIAVLFERFISKERDEPPDIDVDFEHERREEVIQYIYQKYGRQRAALAATVISYRFKSAVRQVGKALGIEETQLDFFLKNINRRDRQAGWQAQLVELGLQPDSLKGQHFIQLVEEIIGFPRHLSQHVGGFVISSGPLYELVPVENAAMPERTIIQWDKDDLESLKLLKVDVLSLGMLTAIRKCFLSIEQHHQQRLSIADITRRQDDQAVYKMIQKADTIGVFQIESRAQMSMLPRLKPACYYDLVIQIAIVRPGPIQGDMVHPFLKRRDGEEPISYPSVHVQEVLERTLGVPIFQEQVIKLAMVAAGFSGGEADQLRRAMAAWKKNGHVFKFKTKLINGMLERGYELDFAERIFEQICGFGEYGFPESHSASFAVLAYCSAWLKHYYPAEFYTALLNSQPMGFYSPSQLVQDAKRHGIAVLPICVNFSNAEHQLVRLTSGELAIRLGFNLIKGLSHEGITRLLTHRPAQGYQCISEVKQILRQAKDIQSLASANAFYQLADNRYLARWQVMDNLDELPLFQTLPSISNNPLPKPSDYQNVLEDYAATGLSLAEHPVAMLEKAGGLTRFTRANQLNQCSHRSLVTVIGLVTGKQSPGTAAGVTFFTLEDDTGNINVVVWQATSRAQKQAYLTARLLMVKGILEREGDVIHVIAGRLIDLTEKLSGLSPKSREFH.

The protein belongs to the DNA polymerase type-C family. DnaE2 subfamily.

The protein localises to the cytoplasm. It catalyses the reaction DNA(n) + a 2'-deoxyribonucleoside 5'-triphosphate = DNA(n+1) + diphosphate. In terms of biological role, DNA polymerase involved in damage-induced mutagenesis and translesion synthesis (TLS). It is not the major replicative DNA polymerase. In Vibrio vulnificus (strain CMCP6), this protein is Error-prone DNA polymerase.